A 61-amino-acid chain; its full sequence is Metallothionein-1C (61 aa).

Positions 1–29 are beta; that stretch reads MDPNCSCSTGSSCSCAGSCTCKACRCPSC. Cys5, Cys7, Cys13, Cys15, Cys19, Cys21, Cys24, Cys26, Cys29, Cys33, Cys34, Cys36, Cys37, Cys41, Cys44, Cys48, Cys50, Cys57, Cys59, and Cys60 together coordinate a divalent metal cation. The segment at 30–61 is alpha; that stretch reads KKSCCSCCPVGCAKCAQGCICKGASDKCSCCA.

Belongs to the metallothionein superfamily. Type 1 family.

In terms of biological role, metallothioneins have a high content of cysteine residues that bind various heavy metals; these proteins are transcriptionally regulated by both heavy metals and glucocorticoids. This chain is Metallothionein-1C (MT1C), found in Ovis aries (Sheep).